Reading from the N-terminus, the 459-residue chain is MSAGGAVEPGLPAAAAAPSAAPARDPGPGHLFRPISAEDEEQQPTEIESLCMNCYRNGMTRLLLTKIPFFREIIVSSFSCEHCGWNNTEIQSAGRIQDQGVRYTLTVRAQEDMDREVVKTDSATTRIPELDFEIPAFSQKGALTTVEGLISRAISGLEQDQPTRRANEEAVAERIDEFIAKLKELKQVASPFTLIIDDPSGNSFVENPHAPRKDDALVITHYNRTLQQEEMLGLQAEAPEEKPEEEDIRNEVLQFNTNCPECNAPAQTNMKLVQIPHFKEVIIMATNCENCGHRTNEVKSGGAVEPLGTRITFHITDPSDMTRDLLKSETCSVEIPELEFELGMAVLGGKFTTLEGMLKDIRELVTKNPFTLGDSSSPGQTEKLQEFSQKLDQILEGILKAHFIMDDPAGNSYLQNVYAPEDDPEMKVEHYKRTFDQNEELGLNDMKTEGYETGLPAQR.

The segment covering 1–29 has biased composition (low complexity); the sequence is MSAGGAVEPGLPAAAAAPSAAPARDPGPG. Residues 1-43 form a disordered region; the sequence is MSAGGAVEPGLPAAAAAPSAAPARDPGPGHLFRPISAEDEEQQ. 2 C4-type zinc fingers span residues 51-83 and 259-291; these read CMNC…CEHC and CPEC…CENC. A disordered region spans residues 438-459; the sequence is NEELGLNDMKTEGYETGLPAQR.

This sequence belongs to the ZPR1 family. As to quaternary structure, component of an import snRNP complex composed of KPNB1, SNUPN, SMN1 and ZNF259. Interacts (via C-terminal region) with SMN1 (via C-terminal region); the interaction occurs after treatment with serum. Interacts with elongation factor 1-alpha EEF1A1; the interaction occurs in a epidermal growth factor (EGF)-dependent manner. Interacts (via zinc fingers) with EGFR (via C-terminal cytoplasmic kinase domain); the interaction is negatively regulated in response to epidermal growth factor (EGF) stimulation and EGFR kinase activity. May also bind to the PDGFR receptor.

The protein resides in the nucleus. It is found in the cytoplasm. Its subcellular location is the nucleolus. The protein localises to the perinuclear region. It localises to the gem. The protein resides in the cajal body. It is found in the cell projection. Its subcellular location is the axon. The protein localises to the growth cone. In terms of biological role, acts as a signaling molecule that communicates proliferative growth signals from the cytoplasm to the nucleus. Plays a role for the localization and accumulation of the survival motor neuron protein SMN1 in sub-nuclear bodies, including gems and Cajal bodies. Induces neuron differentiation and stimulates axonal growth and formation of growth cone in spinal cord motor neurons. Plays a role in the splicing of cellular pre-mRNAs. May be involved in H(2)O(2)-induced neuronal cell death. The sequence is that of Zinc finger protein ZPR1 (ZNF259) from Bos taurus (Bovine).